A 370-amino-acid chain; its full sequence is Mesoderm posterior protein 2 (370 aa).

Disordered stretches follow at residues Pro51–Lys89, Ser231–Gln265, and Thr325–Leu350. Residues Pro57–Ala77 show a composition bias toward low complexity. Positions Gly79 to Leu133 constitute a bHLH domain. The span at Thr325–Ala334 shows a compositional bias: polar residues. The interval Ser326 to Gly330 is may contain a degradation domain.

Post-translationally, degraded by the proteasome. Phosphorylated.

It localises to the nucleus. Functionally, transcription factor with important role in somitogenesis. Defines the rostrocaudal patterning of the somite by participating in distinct Notch pathways. Also regulates the FGF signaling pathway. Specifies the rostral half of the somites. Generates rostro-caudal polarity of somites by down-regulating in the presumptive rostral domain DLL1, a Notch ligand. Participates in the segment border formation by activating in the anterior presomitic mesoderm LFNG, a negative regulator of DLL1-Notch signaling. Acts as a strong suppressor of Notch activity. Together with MESP1 is involved in the epithelialization of somitic mesoderm and in the development of cardiac mesoderm. May play a role with Tcf15 in the differentiation of myotomal and sclerotomal cells by regulating Pax family genes. Also controls the expression of the protocadherin PCDH8/PAPC, EPHA4, RIPPLY2, NOTCH2, FGFR1, and CER1. Binds to the E-boxes within the EPH4A and RIPPLY2 enhancers. This chain is Mesoderm posterior protein 2 (Mesp2), found in Mus musculus (Mouse).